A 323-amino-acid polypeptide reads, in one-letter code: Protein translocase subunit SecF (323 aa).

Residues 1-22 (MAQEYTVEQLNHGRKVYDFMRW) are Cytoplasmic-facing. The chain crosses the membrane as a helical span at residues 23–43 (DYWAFGISGLLLIAAIVIMGV). The Periplasmic segment spans residues 44–142 (RGFNWGLDFT…FVGPSVGADL (99 aa)). A helical membrane pass occupies residues 143-163 (AQTGAMALMAALLSILVYVGF). Over 164–170 (RFEWRLA) the chain is Cytoplasmic. Residues 171-191 (AGVVIALAHDVIITLGILSLF) form a helical membrane-spanning segment. Residues 192–196 (HIEID) lie on the Periplasmic side of the membrane. Residues 197–217 (LTIVASLMSVIGYSLNDSIVV) traverse the membrane as a helical segment. Topologically, residues 218–247 (SDRIRENFRKIRRGTPYEIFNVSLTQTLHR) are cytoplasmic. The chain crosses the membrane as a helical span at residues 248–270 (TLITSGTTLMVILMLYLFGGPVL). Topologically, residues 271-280 (EGFSLTMLIG) are periplasmic. The chain crosses the membrane as a helical span at residues 281 to 301 (VSIGTASSIYVASALALKLGM). At 302–323 (KREHMLQQKVEKEGADQPSILP) the chain is on the cytoplasmic side.

Belongs to the SecD/SecF family. SecF subfamily. As to quaternary structure, forms a complex with SecD. Part of the essential Sec protein translocation apparatus which comprises SecA, SecYEG and auxiliary proteins SecDF-YajC and YidC.

It is found in the cell inner membrane. Its function is as follows. Part of the Sec protein translocase complex. Interacts with the SecYEG preprotein conducting channel. SecDF uses the proton motive force (PMF) to complete protein translocation after the ATP-dependent function of SecA. The protein is Protein translocase subunit SecF of Escherichia coli O157:H7.